Here is a 417-residue protein sequence, read N- to C-terminus: Serine hydroxymethyltransferase (417 aa).

(6S)-5,6,7,8-tetrahydrofolate-binding positions include L121 and 125–127 (GHL). K229 is subject to N6-(pyridoxal phosphate)lysine. 355–357 (SPF) is a binding site for (6S)-5,6,7,8-tetrahydrofolate.

The protein belongs to the SHMT family. Homodimer. Pyridoxal 5'-phosphate serves as cofactor.

The protein localises to the cytoplasm. The catalysed reaction is (6R)-5,10-methylene-5,6,7,8-tetrahydrofolate + glycine + H2O = (6S)-5,6,7,8-tetrahydrofolate + L-serine. Its pathway is one-carbon metabolism; tetrahydrofolate interconversion. It functions in the pathway amino-acid biosynthesis; glycine biosynthesis; glycine from L-serine: step 1/1. Functionally, catalyzes the reversible interconversion of serine and glycine with tetrahydrofolate (THF) serving as the one-carbon carrier. This reaction serves as the major source of one-carbon groups required for the biosynthesis of purines, thymidylate, methionine, and other important biomolecules. Also exhibits THF-independent aldolase activity toward beta-hydroxyamino acids, producing glycine and aldehydes, via a retro-aldol mechanism. The chain is Serine hydroxymethyltransferase from Shewanella putrefaciens (strain CN-32 / ATCC BAA-453).